The primary structure comprises 391 residues: Phosphoglycerate kinase (391 aa).

Substrate is bound by residues 19 to 21 (DYN), Arg-35, 58 to 61 (HMGR), Arg-117, and Arg-150. ATP is bound by residues Lys-201, Glu-323, and 349–352 (GGDT).

The protein belongs to the phosphoglycerate kinase family. As to quaternary structure, monomer.

Its subcellular location is the cytoplasm. It carries out the reaction (2R)-3-phosphoglycerate + ATP = (2R)-3-phospho-glyceroyl phosphate + ADP. It functions in the pathway carbohydrate degradation; glycolysis; pyruvate from D-glyceraldehyde 3-phosphate: step 2/5. This is Phosphoglycerate kinase from Desulforapulum autotrophicum (strain ATCC 43914 / DSM 3382 / VKM B-1955 / HRM2) (Desulfobacterium autotrophicum).